Here is a 645-residue protein sequence, read N- to C-terminus: Protein disulfide-isomerase A4 (645 aa).

The first 20 residues, 1–20 (MRPRKAFLLLLLLGLVQLLA), serve as a signal peptide directing secretion. Thioredoxin domains follow at residues 21–169 (VAGA…EVSQ) and 158–301 (EEIV…EFLK). The segment at 24-58 (AEGPDEDSSNRENAIEDEEEEEEEDDDEEEDDLEV) is disordered. Residues 38–58 (IEDEEEEEEEDDDEEEDDLEV) show a composition bias toward acidic residues. The short motif at 91 to 94 (CGHC) is the CXXC element. Disulfide bonds link Cys91–Cys94 and Cys206–Cys209. Residue Lys366 is modified to N6-acetyllysine. The region spanning 505-636 (FKKGKLKPVI…LSKFIEEHAT (132 aa)) is the Thioredoxin 3 domain. A CXXC motif is present at residues 555–558 (CGHC). Cys555 and Cys558 are joined by a disulfide. The short motif at 642–645 (KEEL) is the Prevents secretion from ER element.

Belongs to the protein disulfide isomerase family. As to quaternary structure, part of a large chaperone multiprotein complex comprising DNAJB11, HSP90B1, HSPA5, HYOU, PDIA2, PDIA4, PDIA6, PPIB, SDF2L1, UGGT1 and very small amounts of ERP29, but not, or at very low levels, CALR nor CANX. Component of a complex containing at least CRELD2, MANF, MATN3 and PDIA4. (Microbial infection) Interacts with Human astrovirus-1 and Human astrovirus-8 spike protein VP25; this interaction seems to facilitate the uncoating during virus entry into the cell. Does not interact with Human astrovirus-2 spike protein VP25.

The protein resides in the endoplasmic reticulum lumen. The protein localises to the melanosome. It catalyses the reaction Catalyzes the rearrangement of -S-S- bonds in proteins.. The chain is Protein disulfide-isomerase A4 (PDIA4) from Homo sapiens (Human).